The chain runs to 76 residues: MKTLVEHIAMALVDHPDDVRVSEHDDGHSLHIELSVHPDDMGKVIGKQGRTAKALRSVVYAAATKQKRRVRLDIID.

A KH domain is found at 29-76; the sequence is SLHIELSVHPDDMGKVIGKQGRTAKALRSVVYAAATKQKRRVRLDIID.

It belongs to the KhpA RNA-binding protein family. As to quaternary structure, forms a complex with KhpB.

It is found in the cytoplasm. Functionally, a probable RNA chaperone. Forms a complex with KhpB which binds to cellular RNA and controls its expression. Plays a role in peptidoglycan (PG) homeostasis and cell length regulation. The chain is RNA-binding protein KhpA from Halalkalibacterium halodurans (strain ATCC BAA-125 / DSM 18197 / FERM 7344 / JCM 9153 / C-125) (Bacillus halodurans).